The primary structure comprises 554 residues: Flavin-dependent halogenase ascD (554 aa).

FAD-binding residues include G15, G18, and E48. Chloride-binding residues include S331 and G332. Residue V333 participates in FAD binding.

It belongs to the flavin-dependent halogenase family.

It carries out the reaction ilicicolin B + FADH2 + chloride + O2 = ilicicolin A + FAD + 2 H2O + H(+). The protein operates within secondary metabolite biosynthesis; terpenoid biosynthesis. Functionally, flavin-dependent halogenase; part of the asc-1 gene cluster that mediates the biosynthesis of both ascochlorin and ascofuranone, a strong inhibitor of cyanide-insensitive alternative oxidases and a promising drug candidate against African trypanosomiasis. The first step in the pathway is performed by the non-reducing polyketide synthase ascC that produces orsellinic acid by condensing acetyl-CoA with 3 malonyl-CoA units. Orsellinic acid is then prenylated by the prenyltransferase ascA to yield ilicicolinic acid B. Ilicicolinic acid B is further reduced to ilicicolin B by the reductase ascB. The halogenase ascD then chlorinates ilicicolin B to produce ilicicolin A which is converted to ilicicolin A epoxide by the cytochrome P450 monooxygenase ascE that catalyzes stereoselective epoxidation of the terminal double bond of the prenyl group. Ilicicolin A epoxide is the last common precursor for the biosynthesis of ascofuranone and ascochlorin. The terpene cyclase ascF produces a monocyclic terpene, and the cyclization reaction is proposed to be initiated by protonation of the terminal epoxide of ilicicolin A epoxide to generate a monocyclic tertiarycation, which is followed by a series of hydride and methyl shifts with abstraction of proton, leading to the formation of the (14S,15R,19R)-trimethylcyclohexanone ring structure of ilicicolin C, which is finally reduced to ascochlorin by the dehydrogenase ascG. On the other hand, ilicicolin A epoxide is hydroxylated by the cytochrome P450 monooxygenase ascH, and the resultant product is cyclized by the terpene cyclase ascI to ascofuranol via protonation-initiated epoxide ring opening, which facilitates the 6-endo-tet cyclization to form the tetrahy-drofuran ring. Finally, ascofuranol is oxidized into ascofuranone by ascJ. This is Flavin-dependent halogenase ascD from Acremonium egyptiacum (Oospora egyptiaca).